The chain runs to 124 residues: Glycine cleavage system H protein (124 aa).

The 83-residue stretch at 19–101 (TGTVGITDYA…AGKGWFLQIK (83 aa)) folds into the Lipoyl-binding domain. An N6-lipoyllysine modification is found at Lys60.

It belongs to the GcvH family. The glycine cleavage system is composed of four proteins: P, T, L and H. Requires (R)-lipoate as cofactor.

Its function is as follows. The glycine cleavage system catalyzes the degradation of glycine. The H protein shuttles the methylamine group of glycine from the P protein to the T protein. In Beijerinckia indica subsp. indica (strain ATCC 9039 / DSM 1715 / NCIMB 8712), this protein is Glycine cleavage system H protein.